The following is a 360-amino-acid chain: 3-isopropylmalate dehydrogenase (360 aa).

An NAD(+)-binding site is contributed by 76-89 (GPKWDKLDMAIRPE). Substrate is bound by residues R96, R106, R134, and D224. Mg(2+) contacts are provided by D224, D248, and D252. 282 to 294 (GSAPDIAGQNMAN) contacts NAD(+).

This sequence belongs to the isocitrate and isopropylmalate dehydrogenases family. LeuB type 1 subfamily. As to quaternary structure, homodimer. Mg(2+) serves as cofactor. Requires Mn(2+) as cofactor.

The protein localises to the cytoplasm. It catalyses the reaction (2R,3S)-3-isopropylmalate + NAD(+) = 4-methyl-2-oxopentanoate + CO2 + NADH. It functions in the pathway amino-acid biosynthesis; L-leucine biosynthesis; L-leucine from 3-methyl-2-oxobutanoate: step 3/4. Catalyzes the oxidation of 3-carboxy-2-hydroxy-4-methylpentanoate (3-isopropylmalate) to 3-carboxy-4-methyl-2-oxopentanoate. The product decarboxylates to 4-methyl-2 oxopentanoate. The protein is 3-isopropylmalate dehydrogenase of Hahella chejuensis (strain KCTC 2396).